The following is a 401-amino-acid chain: (1R,4R,5S)-(-)-guaia-6,10(14)-diene synthase (401 aa).

Positions 134 and 139 each coordinate Mg(2+). The DDXXD motif signature appears at 134–138 (DDQFD). Arg242 lines the substrate pocket. Mg(2+)-binding residues include Asn288 and Ser292. Lys295 contacts substrate. Asp296 contributes to the Mg(2+) binding site. 375 to 376 (RY) serves as a coordination point for substrate.

This sequence belongs to the terpene synthase family. The cofactor is Mg(2+).

The enzyme catalyses (2E,6E)-farnesyl diphosphate = (1R,4R,5S)-(-)-guaia-6,10(14)-diene + diphosphate. The protein operates within secondary metabolite biosynthesis; terpenoid biosynthesis. Functionally, catalyzes the conversion of (2E,6E)-farnesyl diphosphate (FPP) to yield the bicyclic sesquiterpene guaia-6,10(14)-diene via a 1,10-cyclization, which requires the abstraction of the pyrophosphate from FPP to yield the (E,E)-germacradienyl cation. The only accepted substrate is farnesyl diphosphate (FPP). This Fusarium mangiferae (Mango malformation disease fungus) protein is (1R,4R,5S)-(-)-guaia-6,10(14)-diene synthase.